We begin with the raw amino-acid sequence, 790 residues long: DNA topoisomerase 1 (790 aa).

3 stretches are compositionally biased toward polar residues: residues 1 to 18 (MKSN…SNVM), 44 to 54 (KLSSGALNGNS), and 61 to 70 (SNLSCPSPYT). Residues 1–196 (MKSNPGITVI…KKRPDVSASV (196 aa)) are disordered. Acidic residues predominate over residues 158-167 (QEEAAADDDP). The span at 168–181 (SISNRNKKSTTPAS) shows a compositional bias: polar residues. Interaction with DNA stretches follow at residues 426-427 (KY), 490-495 (RAGNEK), and 581-583 (TAK). The 358-residue stretch at 433-790 (SSSLKGKVTR…AMDVVLIFRF (358 aa)) folds into the Topo IB-type catalytic domain. Catalysis depends on Y749, which acts as the O-(3'-phospho-DNA)-tyrosine intermediate.

It belongs to the type IB topoisomerase family.

The protein localises to the nucleus. It catalyses the reaction ATP-independent breakage of single-stranded DNA, followed by passage and rejoining.. In terms of biological role, releases the supercoiling and torsional tension of DNA introduced during the DNA replication and transcription by transiently cleaving and rejoining one strand of the DNA duplex. Introduces a single-strand break via transesterification at a target site in duplex DNA. The scissile phosphodiester is attacked by the catalytic tyrosine of the enzyme, resulting in the formation of a DNA-(3'-phosphotyrosyl)-enzyme intermediate and the expulsion of a 5'-OH DNA strand. The free DNA strand then rotates around the intact phosphodiester bond on the opposing strand, thus removing DNA supercoils. Finally, in the religation step, the DNA 5'-OH attacks the covalent intermediate to expel the active-site tyrosine and restore the DNA phosphodiester backbone. The polypeptide is DNA topoisomerase 1 (TOP1) (Daucus carota (Wild carrot)).